A 274-amino-acid polypeptide reads, in one-letter code: Mitochondrial outer membrane protein porin 3 (274 aa).

Ser-76 bears the Phosphoserine mark.

The protein belongs to the eukaryotic mitochondrial porin (TC 1.B.8.1) family. As to quaternary structure, interacts with KIN14F/KP1. Interacts with FBA6 and GAPC1. In terms of tissue distribution, expressed in leaf tips, anthers and stigma.

Its subcellular location is the cell membrane. The protein localises to the mitochondrion outer membrane. Forms a channel through the mitochondrial outer membrane that allows diffusion of small hydrophilic molecules. The channel adopts an open conformation at low or zero membrane potential and a closed conformation at potentials above 30-40 mV. The open state has a weak anion selectivity whereas the closed state is cation-selective. This is Mitochondrial outer membrane protein porin 3 (VDAC3) from Arabidopsis thaliana (Mouse-ear cress).